The following is a 1774-amino-acid chain: U3 small nucleolar RNA-associated protein 10 (1774 aa).

The segment at 1209 to 1228 is disordered; the sequence is TEQGKSDGDESGSEPDNDNP. The HEAT repeat unit spans residues 1734–1772; that stretch reads LVPVIAELLEDDDEEVEQEVRTGLVKVVETVLGEPFDRY.

The protein belongs to the HEATR1/UTP10 family. In terms of assembly, component of the ribosomal small subunit (SSU) processome.

It localises to the nucleus. The protein localises to the nucleolus. In terms of biological role, involved in nucleolar processing of pre-18S ribosomal RNA. Involved in ribosome biosynthesis. In Eremothecium gossypii (strain ATCC 10895 / CBS 109.51 / FGSC 9923 / NRRL Y-1056) (Yeast), this protein is U3 small nucleolar RNA-associated protein 10.